A 134-amino-acid chain; its full sequence is T-cell receptor beta chain V region CTL-F3 (134 aa).

A signal peptide spans Met1–Thr19. A v segment region spans residues Asn20–Leu115. An intrachain disulfide couples Cys42 to Cys111. A glycan (N-linked (GlcNAc...) asparagine) is linked at Asn90. A d segment region spans residues Ser116–Val119. Residues Ser120 to Leu134 form a j segment region.

In Mus musculus (Mouse), this protein is T-cell receptor beta chain V region CTL-F3.